Consider the following 567-residue polypeptide: MGRGLLRGLWPLHIVLWTRIASTIPPHVQKSVNNDMIVTDNNGAVKFPQLCKFCDVRFSTCDNQKSCMSNCSITSICEKPQEVCVAVWRKNDENITLETVCHDPKLPYHDFILEDAASPKCIMKEKKKPGETFFMCSCSSDECNDNIIFSEEYNTSNPDLLLVIFQVTGISLLPPLGVAISVIIIFYCYRVNRQQKLSSTWETGKTRKLMEFSEHCAIILEDDRSDISSTCANNINHNTELLPIELDTLVGKGRFAEVYKAKLKQNTSEQFETVAVKIFPYEEYASWKTEKDIFSDINLKHENILQFLTAEERKTELGKQYWLITAFHAKGNLQEYLTRHVISWEDLRKLGSSLARGIAHLHSDHTPCGRPKMPIVHRDLKSSNILVKNDLTCCLCDFGLSLRLDPTLSVDDLANSGQVGTARYMAPEVLESRMNLENVESFKQTDVYSMALVLWEMTSRCNAVGEVKDYEPPFGSKVREHPCVESMKDNVLRDRGRPEIPSFWLNHQGIQMVCETLTECWDHDPEARLTAQCVAERFSELEHLDRLSGRSCSEEKIPEDGSLNTTK.

The signal sequence occupies residues 1–22 (MGRGLLRGLWPLHIVLWTRIAS). Over 23–166 (TIPPHVQKSV…NPDLLLVIFQ (144 aa)) the chain is Extracellular. 6 disulfide bridges follow: Cys51-Cys84, Cys54-Cys71, Cys61-Cys67, Cys77-Cys101, Cys121-Cys136, and Cys138-Cys143. 2 N-linked (GlcNAc...) asparagine glycosylation sites follow: Asn70 and Asn94. Asn154 carries an N-linked (GlcNAc...) asparagine glycan. Residues 167 to 187 (VTGISLLPPLGVAISVIIIFY) form a helical membrane-spanning segment. The Cytoplasmic portion of the chain corresponds to 188 to 567 (CYRVNRQQKL…PEDGSLNTTK (380 aa)). The 301-residue stretch at 244 to 544 (IELDTLVGKG…AERFSELEHL (301 aa)) folds into the Protein kinase domain. ATP-binding positions include 250-258 (VGKGRFAEV) and Lys277. The active-site Proton acceptor is the Asp379. Residues Ser409, Ser548, and Ser553 each carry the phosphoserine modification. The interval 439 to 567 (VESFKQTDVY…PEDGSLNTTK (129 aa)) is sufficient for interaction with CLU.

The protein belongs to the protein kinase superfamily. TKL Ser/Thr protein kinase family. TGFB receptor subfamily. Homodimer. Heterohexamer; TGFB1, TGFB2 and TGFB3 homodimeric ligands assemble a functional receptor composed of two TGFBR1 and TGFBR2 heterodimers to form a ligand-receptor heterohexamer. The respective affinity of TGFRB1 and TGFRB2 for the ligands may modulate the kinetics of assembly of the receptor and may explain the different biological activities of TGFB1, TGFB2 and TGFB3. Component of a complex composed of TSC22D1 (via N-terminus), TGFBR1 and TGFBR2; the interaction between TSC22D1 and TGFBR1 is inhibited by SMAD7 and promoted by TGFB1. Interacts with DAXX. Interacts with DYNLT4. Interacts with ZFYVE9; ZFYVE9 recruits SMAD2 and SMAD3 to the TGF-beta receptor. Interacts with and is activated by SCUBE3; this interaction does not affect TGFB1-binding to TGFBR2. Interacts with VPS39; this interaction is independent of the receptor kinase activity and of the presence of TGF-beta. Interacts with CLU. As to quaternary structure, homodimer; disulfide-linked. The cofactor is Mg(2+). Requires Mn(2+) as cofactor. Phosphorylated on a Ser/Thr residue in the cytoplasmic domain.

The protein localises to the cell membrane. The protein resides in the membrane raft. Its subcellular location is the secreted. It catalyses the reaction L-threonyl-[receptor-protein] + ATP = O-phospho-L-threonyl-[receptor-protein] + ADP + H(+). The enzyme catalyses L-seryl-[receptor-protein] + ATP = O-phospho-L-seryl-[receptor-protein] + ADP + H(+). In terms of biological role, transmembrane serine/threonine kinase forming with the TGF-beta type I serine/threonine kinase receptor, TGFBR1, the non-promiscuous receptor for the TGF-beta cytokines TGFB1, TGFB2 and TGFB3. Transduces the TGFB1, TGFB2 and TGFB3 signal from the cell surface to the cytoplasm and thus regulates a plethora of physiological and pathological processes including cell cycle arrest in epithelial and hematopoietic cells, control of mesenchymal cell proliferation and differentiation, wound healing, extracellular matrix production, immunosuppression and carcinogenesis. The formation of the receptor complex composed of 2 TGFBR1 and 2 TGFBR2 molecules symmetrically bound to the cytokine dimer results in the phosphorylation and activation of TGFBR1 by the constitutively active TGFBR2. Activated TGFBR1 phosphorylates SMAD2 which dissociates from the receptor and interacts with SMAD4. The SMAD2-SMAD4 complex is subsequently translocated to the nucleus where it modulates the transcription of the TGF-beta-regulated genes. This constitutes the canonical SMAD-dependent TGF-beta signaling cascade. Also involved in non-canonical, SMAD-independent TGF-beta signaling pathways. Has transforming growth factor beta-activated receptor activity. Its function is as follows. Binds TGFB1, TGFB2 and TGFB3 in the picomolar affinity range without the participation of additional receptors. Blocks activation of SMAD2 and SMAD3 by TGFB1. This Homo sapiens (Human) protein is TGF-beta receptor type-2 (TGFBR2).